Reading from the N-terminus, the 262-residue chain is Small ribosomal subunit protein uS2 (262 aa).

The disordered stretch occupies residues 225–262; that stretch reads KQGEQLTEEAKPEDKEDEKGQAEEKEVKEENNSANKEE. The segment covering 232-262 has biased composition (basic and acidic residues); sequence EEAKPEDKEDEKGQAEEKEVKEENNSANKEE.

This sequence belongs to the universal ribosomal protein uS2 family.

The polypeptide is Small ribosomal subunit protein uS2 (Halothermothrix orenii (strain H 168 / OCM 544 / DSM 9562)).